The chain runs to 552 residues: CTP synthase (552 aa).

An amidoligase domain region spans residues 1-267; sequence MSKFVFVTGG…AHQTLELLRM (267 aa). S13 lines the CTP pocket. UTP is bound at residue S13. Residues 14-19 and D71 contribute to the ATP site; that span reads SIGKGI. Residues D71 and E141 each contribute to the Mg(2+) site. Residues 148–150, 188–193, and K224 contribute to the CTP site; these read DIE and KTKPTQ. Residues 188–193 and K224 each bind UTP; that span reads KTKPTQ. The Glutamine amidotransferase type-1 domain maps to 292–534; the sequence is TVALVGKYVQ…INAVLKRRNA (243 aa). Position 354 (G354) interacts with L-glutamine. The active-site Nucleophile; for glutamine hydrolysis is the C381. Residues 382-385, E405, and R462 contribute to the L-glutamine site; that span reads LGMQ. Residues H507 and E509 contribute to the active site.

The protein belongs to the CTP synthase family. Homotetramer.

It catalyses the reaction UTP + L-glutamine + ATP + H2O = CTP + L-glutamate + ADP + phosphate + 2 H(+). The catalysed reaction is L-glutamine + H2O = L-glutamate + NH4(+). The enzyme catalyses UTP + NH4(+) + ATP = CTP + ADP + phosphate + 2 H(+). Its pathway is pyrimidine metabolism; CTP biosynthesis via de novo pathway; CTP from UDP: step 2/2. Its activity is regulated as follows. Allosterically activated by GTP, when glutamine is the substrate; GTP has no effect on the reaction when ammonia is the substrate. The allosteric effector GTP functions by stabilizing the protein conformation that binds the tetrahedral intermediate(s) formed during glutamine hydrolysis. Inhibited by the product CTP, via allosteric rather than competitive inhibition. Its function is as follows. Catalyzes the ATP-dependent amination of UTP to CTP with either L-glutamine or ammonia as the source of nitrogen. Regulates intracellular CTP levels through interactions with the four ribonucleotide triphosphates. In Synechocystis sp. (strain ATCC 27184 / PCC 6803 / Kazusa), this protein is CTP synthase.